An 80-amino-acid chain; its full sequence is Exodeoxyribonuclease 7 small subunit (80 aa).

This sequence belongs to the XseB family. In terms of assembly, heterooligomer composed of large and small subunits.

The protein resides in the cytoplasm. The enzyme catalyses Exonucleolytic cleavage in either 5'- to 3'- or 3'- to 5'-direction to yield nucleoside 5'-phosphates.. In terms of biological role, bidirectionally degrades single-stranded DNA into large acid-insoluble oligonucleotides, which are then degraded further into small acid-soluble oligonucleotides. The sequence is that of Exodeoxyribonuclease 7 small subunit from Klebsiella pneumoniae (strain 342).